Consider the following 419-residue polypeptide: UDP-N-acetylglucosamine 1-carboxyvinyltransferase (419 aa).

22–23 (KN) contacts phosphoenolpyruvate. Arginine 91 provides a ligand contact to UDP-N-acetyl-alpha-D-glucosamine. Cysteine 115 serves as the catalytic Proton donor. Cysteine 115 carries the 2-(S-cysteinyl)pyruvic acid O-phosphothioketal modification. Residues 120 to 124 (RPVDL), 160 to 163 (KVSV), aspartate 305, and isoleucine 327 each bind UDP-N-acetyl-alpha-D-glucosamine.

It belongs to the EPSP synthase family. MurA subfamily.

It is found in the cytoplasm. The enzyme catalyses phosphoenolpyruvate + UDP-N-acetyl-alpha-D-glucosamine = UDP-N-acetyl-3-O-(1-carboxyvinyl)-alpha-D-glucosamine + phosphate. The protein operates within cell wall biogenesis; peptidoglycan biosynthesis. Its function is as follows. Cell wall formation. Adds enolpyruvyl to UDP-N-acetylglucosamine. This chain is UDP-N-acetylglucosamine 1-carboxyvinyltransferase, found in Tolumonas auensis (strain DSM 9187 / NBRC 110442 / TA 4).